We begin with the raw amino-acid sequence, 631 residues long: Phosphomethylpyrimidine synthase (631 aa).

Substrate-binding positions include Asn239, Met268, Tyr297, His333, 353 to 355 (SRG), 394 to 397 (DGLR), and Glu433. His437 is a Zn(2+) binding site. Tyr460 is a substrate binding site. Residue His501 participates in Zn(2+) binding. Cys581, Cys584, and Cys589 together coordinate [4Fe-4S] cluster.

It belongs to the ThiC family. Homodimer. Requires [4Fe-4S] cluster as cofactor.

The enzyme catalyses 5-amino-1-(5-phospho-beta-D-ribosyl)imidazole + S-adenosyl-L-methionine = 4-amino-2-methyl-5-(phosphooxymethyl)pyrimidine + CO + 5'-deoxyadenosine + formate + L-methionine + 3 H(+). It participates in cofactor biosynthesis; thiamine diphosphate biosynthesis. Functionally, catalyzes the synthesis of the hydroxymethylpyrimidine phosphate (HMP-P) moiety of thiamine from aminoimidazole ribotide (AIR) in a radical S-adenosyl-L-methionine (SAM)-dependent reaction. This Escherichia coli O139:H28 (strain E24377A / ETEC) protein is Phosphomethylpyrimidine synthase.